The following is a 98-amino-acid chain: MSAAARHYDTILSPVITEKSTLLSEESKVVFFVPLSANKGEIAEAVEALFKVKVTAVNTIKVHGKTKRFRGIPGRRNDQKKAVVTLAEGHSIDVTTGL.

Belongs to the universal ribosomal protein uL23 family. In terms of assembly, part of the 50S ribosomal subunit. Contacts protein L29, and trigger factor when it is bound to the ribosome.

One of the early assembly proteins it binds 23S rRNA. One of the proteins that surrounds the polypeptide exit tunnel on the outside of the ribosome. Forms the main docking site for trigger factor binding to the ribosome. The protein is Large ribosomal subunit protein uL23 of Maricaulis maris (strain MCS10) (Caulobacter maris).